The primary structure comprises 326 residues: dTDP-4-dehydro-6-deoxy-D-allose reductase (326 aa).

NAD(+) is bound by residues 15–21 and 129–132; these read GALGFIG and MSSS. Residue tyrosine 160 is the Proton donor/acceptor of the active site. NAD(+) is bound by residues lysine 164 and 187-190; that span reads PGNV.

Belongs to the NAD(P)-dependent epimerase/dehydratase family.

The enzyme catalyses dTDP-6-deoxy-alpha-D-allose + NAD(+) = dTDP-4-dehydro-6-deoxy-alpha-D-allose + NADH + H(+). The catalysed reaction is dTDP-6-deoxy-alpha-D-allose + NADP(+) = dTDP-4-dehydro-6-deoxy-alpha-D-allose + NADPH + H(+). Catalyzes the stereospecific reduction of the C-4 keto group of dTDP-4-dehydro-6-deoxy-D-allose, leading to dTDP-6-deoxy-D-allose, an intermediate in the biosynthesis of the mycinose moiety of dihydrochalcomycin (GERI-155) antibiotic. Cannot directly reduce dTDP-4-dehydro-6-deoxyglucose, and thus acts after the epimerization step catalyzed by GerF. The polypeptide is dTDP-4-dehydro-6-deoxy-D-allose reductase (gerKI) (Streptomyces sp).